A 553-amino-acid polypeptide reads, in one-letter code: Transcription factor 7-like 1 (553 aa).

Residues 1–11 (MPQLNSGGGDE) are compositionally biased toward gly residues. The interval 1–61 (MPQLNSGGGD…SENHSSDSDS (61 aa)) is interaction with CTNNB1. 3 disordered regions span residues 1–77 (MPQL…EKPR), 183–213 (GTPP…PYYP), and 392–474 (SARD…LTTK). 2 stretches are compositionally biased toward basic and acidic residues: residues 17 to 32 (ELIR…EKSP) and 52 to 77 (SENH…EKPR). Residues 109-312 (LGGHYLPNGA…SPNLITKPSV (204 aa)) form an interaction with AES and TLE4 region. Residues 324–392 (IKKPLNAFML…LHSQLYPTWS (69 aa)) constitute a DNA-binding region (HMG box). Residues 407–416 (KQSPEMEITK) are compositionally biased toward basic and acidic residues. The interval 408-553 (QSPEMEITKT…PLSLVTKSSD (146 aa)) is interaction with CTBP. Low complexity predominate over residues 444–463 (SPATPSAALASPAAPAATHS). Residues 464–473 (EQAQPLSLTT) show a composition bias toward polar residues.

It belongs to the TCF/LEF family. Interacts with csnk1e, ctnnb1, ctbp, dact1 and gsk3b. May interact with ase and tle4. Phosphorylated. Phosphorylation by csnk1e promotes binding to ctnnb1 while phosphorylation by gsk3b may reverse this effect.

The protein localises to the nucleus. Participates in the Wnt signaling pathway. Binds to DNA and acts as a repressor in the absence of ctnnb1, and as an activator in its presence. Required early in development for the establishment of the dorsal body axis in response to maternal Wnt signaling. This Xenopus tropicalis (Western clawed frog) protein is Transcription factor 7-like 1 (tcf7l1).